Consider the following 358-residue polypeptide: Peptide chain release factor 2 (358 aa).

The residue at position 242 (glutamine 242) is an N5-methylglutamine.

Belongs to the prokaryotic/mitochondrial release factor family. Methylated by PrmC. Methylation increases the termination efficiency of RF2.

It is found in the cytoplasm. Peptide chain release factor 2 directs the termination of translation in response to the peptide chain termination codons UGA and UAA. The polypeptide is Peptide chain release factor 2 (prfB) (Borreliella burgdorferi (strain ATCC 35210 / DSM 4680 / CIP 102532 / B31) (Borrelia burgdorferi)).